We begin with the raw amino-acid sequence, 721 residues long: Cell wall protein RBT1 (721 aa).

Residues 1-20 (MRFATAQLAALAYYILSTEA) form the signal peptide. The Flo11 domain maps to 55-278 (GSKNKREAEI…DCQCDTPSPS (224 aa)). Disordered stretches follow at residues 278–410 (STTT…LTTT), 453–510 (LTET…TVTE), and 555–666 (TPAT…ALVS). A compositionally biased stretch (low complexity) spans 454–499 (TETTPVPSSVDSTSVTSAPETTPESTAPESSAPESSAPESSAPVTE). A compositionally biased stretch (polar residues) spans 500-510 (TPTGPVSTVTE). Composition is skewed to low complexity over residues 555 to 575 (TPAT…VPAT) and 584 to 663 (SSAP…KTSA). Ser-696 carries GPI-anchor amidated serine lipidation. Positions 697-721 (SFEGAGNNMRLTYGAAIIGLAAFLI) are cleaved as a propeptide — removed in mature form.

It belongs to the HWP1 family. The GPI-anchor is attached to the protein in the endoplasmic reticulum and serves to target the protein to the cell surface. There, the glucosamine-inositol phospholipid moiety is cleaved off and the GPI-modified mannoprotein is covalently attached via its lipidless GPI glycan remnant to the 1,6-beta-glucan of the outer cell wall layer.

Its subcellular location is the secreted. The protein localises to the cell wall. It localises to the membrane. GPI-anchored cell wall protein required for mating efficiency, biofilm formation, and virulence. Involved in normal disseminated infection, but not in intestinal colonization. This chain is Cell wall protein RBT1 (RBT1), found in Candida albicans (strain SC5314 / ATCC MYA-2876) (Yeast).